The sequence spans 78 residues: Small ribosomal subunit protein bS18 (78 aa).

This sequence belongs to the bacterial ribosomal protein bS18 family. Part of the 30S ribosomal subunit. Forms a tight heterodimer with protein bS6.

In terms of biological role, binds as a heterodimer with protein bS6 to the central domain of the 16S rRNA, where it helps stabilize the platform of the 30S subunit. The polypeptide is Small ribosomal subunit protein bS18 (Lactobacillus delbrueckii subsp. bulgaricus (strain ATCC BAA-365 / Lb-18)).